We begin with the raw amino-acid sequence, 288 residues long: Eukaryotic translation initiation factor 3 subunit G (288 aa).

Disordered regions lie at residues 1-33 and 156-197; these read MSKL…NKDG and DEPT…GGER. An RRM domain is found at 208-286; that stretch reads ATLRVTNVSE…LILRVEFAKR (79 aa).

It belongs to the eIF-3 subunit G family. As to quaternary structure, component of the eukaryotic translation initiation factor 3 (eIF-3) complex.

It is found in the cytoplasm. Functionally, RNA-binding component of the eukaryotic translation initiation factor 3 (eIF-3) complex, which is involved in protein synthesis of a specialized repertoire of mRNAs and, together with other initiation factors, stimulates binding of mRNA and methionyl-tRNAi to the 40S ribosome. The eIF-3 complex specifically targets and initiates translation of a subset of mRNAs involved in cell proliferation. This subunit can bind 18S rRNA. This is Eukaryotic translation initiation factor 3 subunit G (tif35) from Aspergillus niger (strain ATCC MYA-4892 / CBS 513.88 / FGSC A1513).